The sequence spans 282 residues: Nucleotide-binding protein XAC2976 (282 aa).

5 to 12 provides a ligand contact to ATP; sequence GLSGSGKS. 57–60 contacts GTP; sequence DVRS.

Belongs to the RapZ-like family.

Displays ATPase and GTPase activities. This chain is Nucleotide-binding protein XAC2976, found in Xanthomonas axonopodis pv. citri (strain 306).